The chain runs to 96 residues: Large ribosomal subunit protein uL23 (96 aa).

Belongs to the universal ribosomal protein uL23 family. Part of the 50S ribosomal subunit. Contacts protein L29, and trigger factor when it is bound to the ribosome.

Its function is as follows. One of the early assembly proteins it binds 23S rRNA. One of the proteins that surrounds the polypeptide exit tunnel on the outside of the ribosome. Forms the main docking site for trigger factor binding to the ribosome. This chain is Large ribosomal subunit protein uL23, found in Oleidesulfovibrio alaskensis (strain ATCC BAA-1058 / DSM 17464 / G20) (Desulfovibrio alaskensis).